Reading from the N-terminus, the 128-residue chain is Sulfurtransferase TusD (128 aa).

C78 (cysteine persulfide intermediate) is an active-site residue.

It belongs to the DsrE/TusD family. Heterohexamer, formed by a dimer of trimers. The hexameric TusBCD complex contains 2 copies each of TusB, TusC and TusD. The TusBCD complex interacts with TusE.

The protein resides in the cytoplasm. Functionally, part of a sulfur-relay system required for 2-thiolation of 5-methylaminomethyl-2-thiouridine (mnm(5)s(2)U) at tRNA wobble positions. Accepts sulfur from TusA and transfers it in turn to TusE. The polypeptide is Sulfurtransferase TusD (Escherichia coli O139:H28 (strain E24377A / ETEC)).